A 57-amino-acid chain; its full sequence is UPF0391 membrane protein RB0084 (57 aa).

Transmembrane regions (helical) follow at residues 4 to 24 (WALIFFVISLIAGFLGFSGVS) and 33 to 53 (ILFYIAVIIFLVFLVLALAVG).

It belongs to the UPF0391 family.

The protein resides in the cell membrane. The polypeptide is UPF0391 membrane protein RB0084 (Rhizobium meliloti (strain 1021) (Ensifer meliloti)).